The following is a 962-amino-acid chain: Phagocyte signaling-impaired protein (962 aa).

3 TPR repeats span residues 45-78, 79-112, and 523-560; these read LCARALKGLALLRLGRYEESHGCLQAVAEDKPTD, DSTLQVLSFCYREMEQLNKIVELYQHAVKKNPGN, and QIQLDSMGYVHCQLLPLCGRFSGARNSYDTTMKFFTNS. Residues 856 to 880 are disordered; sequence TKVKKKQGDNKTQDTPQPVSEKERS.

The protein belongs to the MDM20/NAA25 family. In terms of assembly, component of the N-terminal acetyltransferase B (NatB) complex.

The protein localises to the lysosome. In terms of biological role, non-catalytic subunit of the NatB complex which catalyzes acetylation of the N-terminal methionine residues of proteins beginning with Met-Asp or Met-Glu. Has 2 roles in the larval immune response: required both for the phagocytic degradation of internalized bacteria and for the induction of Defensin in the fat body. Within the phagocytic blood cells, has a role in detection of infection and activation of the humoral immune response. In Drosophila pseudoobscura pseudoobscura (Fruit fly), this protein is Phagocyte signaling-impaired protein.